The primary structure comprises 322 residues: Ribose-phosphate pyrophosphokinase 1 (322 aa).

ATP is bound by residues D39–E41 and R98–Q99. Mg(2+) contacts are provided by H132 and D173. Residue K196 is part of the active site. D-ribose 5-phosphate contacts are provided by residues R198, D224, and D228–T232.

The protein belongs to the ribose-phosphate pyrophosphokinase family. Class I subfamily. As to quaternary structure, homohexamer. It depends on Mg(2+) as a cofactor.

It is found in the cytoplasm. It carries out the reaction D-ribose 5-phosphate + ATP = 5-phospho-alpha-D-ribose 1-diphosphate + AMP + H(+). It functions in the pathway metabolic intermediate biosynthesis; 5-phospho-alpha-D-ribose 1-diphosphate biosynthesis; 5-phospho-alpha-D-ribose 1-diphosphate from D-ribose 5-phosphate (route I): step 1/1. In terms of biological role, involved in the biosynthesis of the central metabolite phospho-alpha-D-ribosyl-1-pyrophosphate (PRPP) via the transfer of pyrophosphoryl group from ATP to 1-hydroxyl of ribose-5-phosphate (Rib-5-P). The chain is Ribose-phosphate pyrophosphokinase 1 from Streptococcus mutans serotype c (strain ATCC 700610 / UA159).